A 1405-amino-acid polypeptide reads, in one-letter code: DNA-directed RNA polymerase subunit beta' (1405 aa).

4 residues coordinate Zn(2+): Cys-70, Cys-72, Cys-85, and Cys-88. Asp-460, Asp-462, and Asp-464 together coordinate Mg(2+). Zn(2+)-binding residues include Cys-814, Cys-888, Cys-895, and Cys-898.

Belongs to the RNA polymerase beta' chain family. In terms of assembly, the RNAP catalytic core consists of 2 alpha, 1 beta, 1 beta' and 1 omega subunit. When a sigma factor is associated with the core the holoenzyme is formed, which can initiate transcription. Mg(2+) serves as cofactor. Zn(2+) is required as a cofactor.

It catalyses the reaction RNA(n) + a ribonucleoside 5'-triphosphate = RNA(n+1) + diphosphate. In terms of biological role, DNA-dependent RNA polymerase catalyzes the transcription of DNA into RNA using the four ribonucleoside triphosphates as substrates. This chain is DNA-directed RNA polymerase subunit beta', found in Shewanella sediminis (strain HAW-EB3).